The sequence spans 323 residues: Mycothiol acetyltransferase (323 aa).

N-acetyltransferase domains follow at residues 21–176 and 173–323; these read ELLR…VSLR and VSLR…LTKN. A 1D-myo-inositol 2-(L-cysteinylamino)-2-deoxy-alpha-D-glucopyranoside-binding site is contributed by E44. Residue 98–100 participates in acetyl-CoA binding; the sequence is LAV. Residues E200, K240, and E253 each contribute to the 1D-myo-inositol 2-(L-cysteinylamino)-2-deoxy-alpha-D-glucopyranoside site. Residues 257–259 and 264–270 contribute to the acetyl-CoA site; these read VGV and QGLGLGK. Y291 serves as a coordination point for 1D-myo-inositol 2-(L-cysteinylamino)-2-deoxy-alpha-D-glucopyranoside.

It belongs to the acetyltransferase family. MshD subfamily. In terms of assembly, monomer.

The enzyme catalyses 1D-myo-inositol 2-(L-cysteinylamino)-2-deoxy-alpha-D-glucopyranoside + acetyl-CoA = mycothiol + CoA + H(+). Its function is as follows. Catalyzes the transfer of acetyl from acetyl-CoA to desacetylmycothiol (Cys-GlcN-Ins) to form mycothiol. This chain is Mycothiol acetyltransferase, found in Paenarthrobacter aurescens (strain TC1).